Reading from the N-terminus, the 443-residue chain is COP9 signalosome complex subunit 2 (443 aa).

Positions 254–416 (AHTDFFEAFK…QLLELDHQKR (163 aa)) constitute a PCI domain.

This sequence belongs to the CSN2 family. Component of the CSN complex, probably composed of cops1, cops2, cops3, cops4, cops5, cops6, cops7, cops8 and cops9.

The protein localises to the cytoplasm. Its subcellular location is the nucleus. Essential component of the COP9 signalosome complex (CSN), a complex involved in various cellular and developmental processes. The CSN complex is an essential regulator of the ubiquitin (Ubl) conjugation pathway by mediating the deneddylation of the cullin subunits of E3 ligase complexes, leading to modify the Ubl ligase activity. The sequence is that of COP9 signalosome complex subunit 2 (cops2) from Danio rerio (Zebrafish).